The primary structure comprises 142 residues: Cell division protein SepF (142 aa).

This sequence belongs to the SepF family. In terms of assembly, homodimer. Interacts with FtsZ.

It is found in the cytoplasm. Its function is as follows. Cell division protein that is part of the divisome complex and is recruited early to the Z-ring. Probably stimulates Z-ring formation, perhaps through the cross-linking of FtsZ protofilaments. Its function overlaps with FtsA. This chain is Cell division protein SepF, found in Geobacillus kaustophilus (strain HTA426).